The primary structure comprises 87 residues: Chromosomal protein MC1b (87 aa).

Its function is as follows. Protects DNA against thermal denaturation and modulates transcription. This chain is Chromosomal protein MC1b, found in Methanothrix soehngenii (Methanosaeta concilii).